The primary structure comprises 413 residues: Hemocyanin type 2 unit e (413 aa).

The N-linked (GlcNAc...) (high mannose) asparagine glycan is linked to Asn-17. His-49 provides a ligand contact to Cu cation. An intrachain disulfide couples Cys-55 to Cys-66. A cross-link (2'-(S-cysteinyl)-histidine (Cys-His)) is located at residues 67–69 (CVH). Residues His-69 and His-78 each contribute to the Cu cation site. Asn-127 is a glycosylation site (N-linked (GlcNAc...) (high mannose) asparagine). Cystine bridges form between Cys-179–Cys-246 and Cys-336–Cys-342. Positions 189, 193, and 220 each coordinate Cu cation.

The protein belongs to the tyrosinase family. Hemocyanin subfamily. Decamers of large identical subunits, each containing 8 globular oxygen-binding functional units. Requires Cu(2+) as cofactor. As to expression, hemolymph.

It localises to the secreted. Its subcellular location is the extracellular space. Its function is as follows. Hemocyanins are copper-containing oxygen carriers occurring freely dissolved in the hemolymph of many mollusks and arthropods. This chain is Hemocyanin type 2 unit e, found in Rapana venosa (Veined rapa whelk).